The chain runs to 179 residues: Bifunctional protein PyrR (179 aa).

Residues 97-109 carry the PRPP-binding motif; sequence IILTDDVLYTGRT.

Belongs to the purine/pyrimidine phosphoribosyltransferase family. PyrR subfamily.

The catalysed reaction is UMP + diphosphate = 5-phospho-alpha-D-ribose 1-diphosphate + uracil. Functionally, regulates the transcription of the pyrimidine nucleotide (pyr) operon in response to exogenous pyrimidines. Also displays a weak uracil phosphoribosyltransferase activity which is not physiologically significant. In Elusimicrobium minutum (strain Pei191), this protein is Bifunctional protein PyrR.